The primary structure comprises 263 residues: Protein STK_14130 (263 aa).

The protein belongs to the CinA family.

This chain is Protein STK_14130, found in Sulfurisphaera tokodaii (strain DSM 16993 / JCM 10545 / NBRC 100140 / 7) (Sulfolobus tokodaii).